The primary structure comprises 273 residues: Diaminopimelate epimerase (273 aa).

Substrate contacts are provided by Asn-11 and Asn-60. The Proton donor role is filled by Cys-69. Substrate contacts are provided by residues 70–71 (GN), Asn-181, and 199–200 (ER). Cys-209 (proton acceptor) is an active-site residue. Residue 210–211 (GT) coordinates substrate.

This sequence belongs to the diaminopimelate epimerase family. As to quaternary structure, homodimer.

The protein localises to the cytoplasm. The enzyme catalyses (2S,6S)-2,6-diaminopimelate = meso-2,6-diaminopimelate. It participates in amino-acid biosynthesis; L-lysine biosynthesis via DAP pathway; DL-2,6-diaminopimelate from LL-2,6-diaminopimelate: step 1/1. Functionally, catalyzes the stereoinversion of LL-2,6-diaminopimelate (L,L-DAP) to meso-diaminopimelate (meso-DAP), a precursor of L-lysine and an essential component of the bacterial peptidoglycan. This is Diaminopimelate epimerase from Helicobacter pylori (strain Shi470).